A 292-amino-acid polypeptide reads, in one-letter code: 4-hydroxy-tetrahydrodipicolinate synthase (292 aa).

Thr-45 is a pyruvate binding site. Catalysis depends on Tyr-133, which acts as the Proton donor/acceptor. Residue Lys-161 is the Schiff-base intermediate with substrate of the active site. Ile-203 contacts pyruvate.

The protein belongs to the DapA family. In terms of assembly, homotetramer; dimer of dimers.

The protein resides in the cytoplasm. The enzyme catalyses L-aspartate 4-semialdehyde + pyruvate = (2S,4S)-4-hydroxy-2,3,4,5-tetrahydrodipicolinate + H2O + H(+). It functions in the pathway amino-acid biosynthesis; L-lysine biosynthesis via DAP pathway; (S)-tetrahydrodipicolinate from L-aspartate: step 3/4. Functionally, catalyzes the condensation of (S)-aspartate-beta-semialdehyde [(S)-ASA] and pyruvate to 4-hydroxy-tetrahydrodipicolinate (HTPA). This Herminiimonas arsenicoxydans protein is 4-hydroxy-tetrahydrodipicolinate synthase.